A 441-amino-acid chain; its full sequence is Chromosomal replication initiator protein DnaA (441 aa).

The domain I, interacts with DnaA modulators stretch occupies residues Met1–Ile80. Positions Ile80–Asn102 are domain II. The segment at Ile103–Ser320 is domain III, AAA+ region. The ATP site is built by Gly147, Gly149, Lys150, and Thr151. Residues Ser321–Glu441 form a domain IV, binds dsDNA region.

Belongs to the DnaA family. In terms of assembly, oligomerizes as a right-handed, spiral filament on DNA at oriC.

It localises to the cytoplasm. Functionally, plays an essential role in the initiation and regulation of chromosomal replication. ATP-DnaA binds to the origin of replication (oriC) to initiate formation of the DNA replication initiation complex once per cell cycle. Binds the DnaA box (a 9 base pair repeat at the origin) and separates the double-stranded (ds)DNA. Forms a right-handed helical filament on oriC DNA; dsDNA binds to the exterior of the filament while single-stranded (ss)DNA is stabiized in the filament's interior. The ATP-DnaA-oriC complex binds and stabilizes one strand of the AT-rich DNA unwinding element (DUE), permitting loading of DNA polymerase. After initiation quickly degrades to an ADP-DnaA complex that is not apt for DNA replication. Binds acidic phospholipids. This chain is Chromosomal replication initiator protein DnaA, found in Desulforamulus reducens (strain ATCC BAA-1160 / DSM 100696 / MI-1) (Desulfotomaculum reducens).